Here is an 874-residue protein sequence, read N- to C-terminus: Alanine--tRNA ligase (874 aa).

4 residues coordinate Zn(2+): His562, His566, Cys664, and His668.

Belongs to the class-II aminoacyl-tRNA synthetase family. It depends on Zn(2+) as a cofactor.

Its subcellular location is the cytoplasm. The enzyme catalyses tRNA(Ala) + L-alanine + ATP = L-alanyl-tRNA(Ala) + AMP + diphosphate. Catalyzes the attachment of alanine to tRNA(Ala) in a two-step reaction: alanine is first activated by ATP to form Ala-AMP and then transferred to the acceptor end of tRNA(Ala). Also edits incorrectly charged Ser-tRNA(Ala) and Gly-tRNA(Ala) via its editing domain. This is Alanine--tRNA ligase from Shewanella baltica (strain OS155 / ATCC BAA-1091).